Reading from the N-terminus, the 384-residue chain is Aurora kinase (384 aa).

Polar residues-rich tracts occupy residues 1–12 (MSYPNNKENSNN) and 19–29 (SVPSKQPQRVL). The tract at residues 1–100 (MSYPNNKENS…SSSSSSSQSV (100 aa)) is disordered. The span at 30-99 (QQQNTNINNH…SSSSSSSSQS (70 aa)) shows a compositional bias: low complexity. Positions 110–360 (FDIGKLLGMG…LKDVINHPWI (251 aa)) constitute a Protein kinase domain. ATP-binding positions include 116–124 (LGMGRFGHV) and K139. D233 acts as the Proton acceptor in catalysis.

Belongs to the protein kinase superfamily. Ser/Thr protein kinase family. Aurora subfamily. Interacts with icpA. Forms a complex at the central spindle.

It localises to the cytoplasm. Its subcellular location is the chromosome. The protein localises to the centromere. It is found in the cytoskeleton. The protein resides in the spindle pole. It localises to the cleavage furrow. Its subcellular location is the cell projection. The protein localises to the neuron projection. It carries out the reaction L-seryl-[protein] + ATP = O-phospho-L-seryl-[protein] + ADP + H(+). It catalyses the reaction L-threonyl-[protein] + ATP = O-phospho-L-threonyl-[protein] + ADP + H(+). Part of a chromosomal passenger complex. The polypeptide is Aurora kinase (aurK) (Dictyostelium discoideum (Social amoeba)).